The sequence spans 225 residues: tRNA (guanine-N(1)-)-methyltransferase (225 aa).

Residues G112 and 132–137 (IGDYVL) each bind S-adenosyl-L-methionine.

This sequence belongs to the RNA methyltransferase TrmD family. In terms of assembly, homodimer.

The protein localises to the cytoplasm. The catalysed reaction is guanosine(37) in tRNA + S-adenosyl-L-methionine = N(1)-methylguanosine(37) in tRNA + S-adenosyl-L-homocysteine + H(+). Specifically methylates guanosine-37 in various tRNAs. This Flavobacterium psychrophilum (strain ATCC 49511 / DSM 21280 / CIP 103535 / JIP02/86) protein is tRNA (guanine-N(1)-)-methyltransferase.